A 452-amino-acid polypeptide reads, in one-letter code: Phosphoglucosamine mutase (452 aa).

S101 acts as the Phosphoserine intermediate in catalysis. Residues S101, D241, D243, and D245 each contribute to the Mg(2+) site. S101 is modified (phosphoserine).

Belongs to the phosphohexose mutase family. Mg(2+) is required as a cofactor. Post-translationally, activated by phosphorylation.

It catalyses the reaction alpha-D-glucosamine 1-phosphate = D-glucosamine 6-phosphate. Catalyzes the conversion of glucosamine-6-phosphate to glucosamine-1-phosphate. This Lactococcus lactis subsp. cremoris (strain SK11) protein is Phosphoglucosamine mutase.